Here is a 65-residue protein sequence, read N- to C-terminus: Pancreatic polypeptide prohormone (65 aa).

At tyrosine 36 the chain carries Tyrosine amide. Residues 59–65 (ELSPMGA) constitute a propeptide that is removed on maturation.

This sequence belongs to the NPY family.

The protein localises to the secreted. In terms of biological role, hormone secreted by pancreatic cells that acts as a regulator of pancreatic and gastrointestinal functions probably by signaling through the G protein-coupled receptor NPY4R2. The chain is Pancreatic polypeptide prohormone (PPY) from Sus scrofa (Pig).